Here is a 516-residue protein sequence, read N- to C-terminus: Probable fucosyltransferase 8 (516 aa).

The chain crosses the membrane as a helical; Signal-anchor for type II membrane protein span at residues I5–F25. At N26–N516 the chain is on the lumenal side. N-linked (GlcNAc...) asparagine glycosylation is found at N35, N116, N211, N362, and N463.

This sequence belongs to the glycosyltransferase 37 family. Expressed in leaves and stems.

It localises to the golgi apparatus. Its subcellular location is the golgi stack membrane. It functions in the pathway protein modification; protein glycosylation. May be involved in cell wall biosynthesis. May act as a fucosyltransferase. The chain is Probable fucosyltransferase 8 (FUT8) from Arabidopsis thaliana (Mouse-ear cress).